The sequence spans 260 residues: uncharacterized protein (260 aa).

In terms of domain architecture, Radical SAM core spans 6-239 (AGVRSGVVVS…VAVAETYLPN (234 aa)).

This is an uncharacterized protein from Sinorhizobium fredii (strain NBRC 101917 / NGR234).